The sequence spans 844 residues: Penicillin-binding protein 1B (844 aa).

The span at 1 to 10 (MAGNDREPIG) shows a compositional bias: basic and acidic residues. Residues 1 to 60 (MAGNDREPIGRKGKPTRPVKQKVSRRRYEDDDDYDDYDDYEDEEPMPRKGKGKGKGRKPR) form a disordered region. Residues 1–63 (MAGNDREPIG…GKGRKPRGKR (63 aa)) lie on the Cytoplasmic side of the membrane. A compositionally biased stretch (basic residues) spans 11 to 25 (RKGKPTRPVKQKVSR). The segment covering 30-44 (DDDDYDDYDDYEDEE) has biased composition (acidic residues). The span at 48-60 (RKGKGKGKGRKPR) shows a compositional bias: basic residues. A helical; Signal-anchor for type II membrane protein transmembrane segment spans residues 64-87 (GWLWLLLKLAIVFAVLIAIYGVYL). The interval 88-250 (DQKIRSRIDG…DGISLYSIGR (163 aa)) is membrane association. Residues 88 to 844 (DQKIRSRIDG…GWIKDMFGSN (757 aa)) lie on the Periplasmic side of the membrane. A uvrB domain 2 homolog region spans residues 109-200 (RMVNLEPDMT…QFGFFRLDPR (92 aa)). Residues 195 to 367 (FRLDPRLITM…SIYNPWRNPK (173 aa)) are transglycosylase. The Proton donor; for transglycosylase activity role is filled by Glu233. The transpeptidase stretch occupies residues 444-736 (SVAQDAAEKA…NNQPTKLYGA (293 aa)). The active-site Acyl-ester intermediate; for transpeptidase activity is Ser510. Low complexity predominate over residues 793–825 (LCQQSEMQQQPSGNPFDQSSQPQQQPQQQPAQQ). Residues 793 to 835 (LCQQSEMQQQPSGNPFDQSSQPQQQPQQQPAQQEQKDSDGVAG) form a disordered region.

The protein in the N-terminal section; belongs to the glycosyltransferase 51 family. This sequence in the C-terminal section; belongs to the transpeptidase family. As to quaternary structure, forms a trimeric complex with MipA and MltA. Has also been shown to exist as monomer or homodimer; homodimer of Alpha and Gamma isozymes can be found. Interacts with UvrA, FtsL and FtsN.

The protein resides in the cell inner membrane. It carries out the reaction [GlcNAc-(1-&gt;4)-Mur2Ac(oyl-L-Ala-gamma-D-Glu-L-Lys-D-Ala-D-Ala)](n)-di-trans,octa-cis-undecaprenyl diphosphate + beta-D-GlcNAc-(1-&gt;4)-Mur2Ac(oyl-L-Ala-gamma-D-Glu-L-Lys-D-Ala-D-Ala)-di-trans,octa-cis-undecaprenyl diphosphate = [GlcNAc-(1-&gt;4)-Mur2Ac(oyl-L-Ala-gamma-D-Glu-L-Lys-D-Ala-D-Ala)](n+1)-di-trans,octa-cis-undecaprenyl diphosphate + di-trans,octa-cis-undecaprenyl diphosphate + H(+). The catalysed reaction is Preferential cleavage: (Ac)2-L-Lys-D-Ala-|-D-Ala. Also transpeptidation of peptidyl-alanyl moieties that are N-acyl substituents of D-alanine.. Its pathway is cell wall biogenesis; peptidoglycan biosynthesis. Functionally, cell wall formation. Synthesis of cross-linked peptidoglycan from the lipid intermediates. The enzyme has a penicillin-insensitive transglycosylase N-terminal domain (formation of linear glycan strands) and a penicillin-sensitive transpeptidase C-terminal domain (cross-linking of the peptide subunits). This Escherichia coli (strain K12) protein is Penicillin-binding protein 1B (mrcB).